Reading from the N-terminus, the 448-residue chain is Trigger factor (448 aa).

Residues 167 to 253 (GSIVRVDFVE…VKDIKRRDIP (87 aa)) form the PPIase FKBP-type domain.

It belongs to the FKBP-type PPIase family. Tig subfamily.

It localises to the cytoplasm. The catalysed reaction is [protein]-peptidylproline (omega=180) = [protein]-peptidylproline (omega=0). Its function is as follows. Involved in protein export. Acts as a chaperone by maintaining the newly synthesized protein in an open conformation. Functions as a peptidyl-prolyl cis-trans isomerase. The chain is Trigger factor from Borrelia duttonii (strain Ly).